The following is a 178-amino-acid chain: Probable chorismate pyruvate-lyase (178 aa).

Positions 37, 78, 114, and 165 each coordinate substrate.

It belongs to the UbiC family.

The protein resides in the cytoplasm. The enzyme catalyses chorismate = 4-hydroxybenzoate + pyruvate. The protein operates within cofactor biosynthesis; ubiquinone biosynthesis. Functionally, removes the pyruvyl group from chorismate, with concomitant aromatization of the ring, to provide 4-hydroxybenzoate (4HB) for the ubiquinone pathway. This Aeromonas salmonicida (strain A449) protein is Probable chorismate pyruvate-lyase.